The following is a 299-amino-acid chain: Probable lipid kinase YegS (299 aa).

Positions 2 to 133 constitute a DAGKc domain; that stretch reads AEFPASLLIL…IDMAQVNKQT (132 aa). ATP contacts are provided by residues Thr-40, 66–72, and Thr-95; that span reads GDGTINE. Positions 215, 218, and 220 each coordinate Mg(2+). Residue Glu-271 is the Proton acceptor of the active site.

This sequence belongs to the diacylglycerol/lipid kinase family. YegS lipid kinase subfamily. Mg(2+) is required as a cofactor. Requires Ca(2+) as cofactor.

It localises to the cytoplasm. Its function is as follows. Probably phosphorylates lipids; the in vivo substrate is unknown. The protein is Probable lipid kinase YegS of Escherichia coli (strain 55989 / EAEC).